Consider the following 448-residue polypeptide: Trigger factor (448 aa).

Positions 172 to 257 (GDRVTVDFVG…MKKIEWPHMP (86 aa)) constitute a PPIase FKBP-type domain.

Belongs to the FKBP-type PPIase family. Tig subfamily.

The protein resides in the cytoplasm. The enzyme catalyses [protein]-peptidylproline (omega=180) = [protein]-peptidylproline (omega=0). Its function is as follows. Involved in protein export. Acts as a chaperone by maintaining the newly synthesized protein in an open conformation. Functions as a peptidyl-prolyl cis-trans isomerase. The polypeptide is Trigger factor (Burkholderia vietnamiensis (strain G4 / LMG 22486) (Burkholderia cepacia (strain R1808))).